The chain runs to 567 residues: MNGIITPQKQKQLMSSPSRDPLSTTELSTPTSQTTVDVNDTKKSEGLDSTIILLTPGTSPNATPGSSELGLSKKPNSIKNNTYSTAAQAAYLNRRAADQSTVMTTDPISYANNNINNGTLPQQNAYYANSYYPSYYAQSQAISNNRPGVSGFRPAFNSVAPCYGSQWQTHQSVHPYHVNNTHQYLKPYVQNVYPQMPSLNQPGLHIVNQPTYLAPVPSATVPTNSVSLSMPSFSQGQKNIPAAINQEMSVGTTKENTNYLSQLVGLHPAIPPAIPSMFPMSHDNKKSNMESTSRTRNVYIRGLPPNTSDENLLLYTNRFGKVSSSKAIIDMETNLCKGYGFACFEEEKSALICISAMTLCGYQCSFAKESFSARLQSLQDTESTNLYISNLPLHWNESDISTLFKPSKIISNRVLRDSKEQSRGVGFARMQDRKTAEDIINKFNNFVLDPALPPLQIRFADSTDQKKFKGQTQKRRLWRAREYSVLTKGMTANNAFSKVEEFANNSMPSKVGMYVPLESNTVYQHSPTYDTYGWQSMYPSYSVYPSNYENSRSTTPYHAHPATSAAN.

Positions 1-18 are enriched in polar residues; sequence MNGIITPQKQKQLMSSPS. 2 disordered regions span residues 1–39 and 52–76; these read MNGI…VDVN and ILLT…KKPN. The segment covering 21-35 has biased composition (low complexity); that stretch reads PLSTTELSTPTSQTT. Over residues 56–66 the composition is skewed to polar residues; sequence PGTSPNATPGS. 2 consecutive RRM domains span residues 296 to 380 and 384 to 462; these read RNVY…SLQD and TNLY…FADS.

Its subcellular location is the cytoplasm. In terms of biological role, RNA-binding protein which plays a role in sporulation. Regulates the progression of meiosis I and may function in the vicinity of the Mei2 dot. The protein is Sporulation-specific protein 5 (spo5) of Schizosaccharomyces pombe (strain 972 / ATCC 24843) (Fission yeast).